The following is a 276-amino-acid chain: Energy-coupling factor transporter ATP-binding protein EcfA1 (276 aa).

Positions 2 to 237 (IEIKNLKFKY…GSELVDLGLD (236 aa)) constitute an ABC transporter domain. Residue 37 to 44 (GHNGSGKS) participates in ATP binding.

Belongs to the ABC transporter superfamily. Energy-coupling factor EcfA family. In terms of assembly, forms a stable energy-coupling factor (ECF) transporter complex composed of 2 membrane-embedded substrate-binding proteins (S component), 2 ATP-binding proteins (A component) and 2 transmembrane proteins (T component).

The protein resides in the cell membrane. ATP-binding (A) component of a common energy-coupling factor (ECF) ABC-transporter complex. Unlike classic ABC transporters this ECF transporter provides the energy necessary to transport a number of different substrates. The chain is Energy-coupling factor transporter ATP-binding protein EcfA1 from Streptococcus thermophilus (strain ATCC BAA-491 / LMD-9).